We begin with the raw amino-acid sequence, 420 residues long: Protein maelstrom homolog (420 aa).

Positions 4–73 (RRASRNAYYF…AQGKDSGPSE (70 aa)) form a DNA-binding region, HMG box. Disordered stretches follow at residues 62-94 (RAAQ…KQNV), 341-372 (GFSH…GQNS), and 392-420 (NIHK…SSLS). Polar residues-rich tracts occupy residues 344–358 (HFSS…NTPT) and 392–407 (NIHK…SPYT).

This sequence belongs to the maelstrom family. Interacts with SMARCB1, SIN3B and DDX4. Interacts with piRNA-associated proteins TDRD1, PIWIL1 and PIWIL2. Interacts with TEX19.

The protein localises to the cytoplasm. It localises to the nucleus. Its function is as follows. Plays a central role during spermatogenesis by repressing transposable elements and preventing their mobilization, which is essential for the germline integrity. Acts via the piRNA metabolic process, which mediates the repression of transposable elements during meiosis by forming complexes composed of piRNAs and Piwi proteins and governs the methylation and subsequent repression of transposons. Its association with piP-bodies suggests a participation in the secondary piRNAs metabolic process. Required for the localization of germ-cell factors to the meiotic nuage. The polypeptide is Protein maelstrom homolog (MAEL) (Bos taurus (Bovine)).